The primary structure comprises 498 residues: MISMKYRDLRDFLSLLEQRGELKRISQPIDPYLEMTEIADRTLRAGGPALLFENPKGYSMPVLCNLFGTAKRVAMGMGQEDVSALRDVGKLLAFLKEPDPPKGFRDLFDKLPKFKQVLNMPTKRLNSAPCQEQVWQGEDVDLSRIPVMHCWPEDAAPLVSWGLTITRGPHKERQNLGIYRQQVLGKNKLIMRWLSHRGGALDYQEWCEAHPGERFPVAVALGADPATILAAVTPVPDTLSEYAFAGLLRGHKTEVVKCLSNDLEVPASAEIVLEGYIEQGDMAPEGPYGDHTGYYNEIDNFPVFTVTHITQRQDAIYHSTYTGRPPDEPAVMGVALNEVFVPILQKQFPEIVDFYLPPEGCSYRLAVVTIKKQYAGHAKRVMMGIWSFLRQFMYTKFVIVCDDDINARDWNDVIWAITTRMDPSRDTVLIENTPIDYLDFASPVSGLGSKMGLDATNKWPAETPREWGRPIKMDEDVRARIDALWDELAIFSDKDAKR.

Residue Asn175 coordinates Mn(2+). Prenylated FMN-binding positions include 178–180, 192–194, and 197–198; these read IYR, RWL, and RG. Glu241 is a binding site for Mn(2+). The Proton donor role is filled by Asp290.

It belongs to the UbiD family. Homohexamer. The cofactor is prenylated FMN. Mn(2+) serves as cofactor.

It is found in the cell membrane. The enzyme catalyses a 4-hydroxy-3-(all-trans-polyprenyl)benzoate + H(+) = a 2-(all-trans-polyprenyl)phenol + CO2. The protein operates within cofactor biosynthesis; ubiquinone biosynthesis. In terms of biological role, catalyzes the decarboxylation of 3-octaprenyl-4-hydroxy benzoate to 2-octaprenylphenol, an intermediate step in ubiquinone biosynthesis. The protein is 3-octaprenyl-4-hydroxybenzoate carboxy-lyase of Yersinia pestis bv. Antiqua (strain Antiqua).